The primary structure comprises 616 residues: Chaperone protein DnaK (616 aa).

Threonine 175 carries the phosphothreonine; by autocatalysis modification. The segment at 579–616 (GGDPSQAGGFDPNAAGGAQQEPHDDNVVDADFKVDDDK) is disordered. Residues 599–616 (EPHDDNVVDADFKVDDDK) are compositionally biased toward basic and acidic residues.

This sequence belongs to the heat shock protein 70 family.

Functionally, acts as a chaperone. The chain is Chaperone protein DnaK from Clostridium botulinum (strain Eklund 17B / Type B).